A 280-amino-acid chain; its full sequence is Orotidine 5'-phosphate decarboxylase (280 aa).

Catalysis depends on lysine 97, which acts as the Proton donor.

This sequence belongs to the OMP decarboxylase family. Type 2 subfamily.

It carries out the reaction orotidine 5'-phosphate + H(+) = UMP + CO2. The protein operates within pyrimidine metabolism; UMP biosynthesis via de novo pathway; UMP from orotate: step 2/2. The protein is Orotidine 5'-phosphate decarboxylase (pyrF) of Corynebacterium efficiens (strain DSM 44549 / YS-314 / AJ 12310 / JCM 11189 / NBRC 100395).